The chain runs to 249 residues: tRNA (guanine-N(1)-)-methyltransferase (249 aa).

S-adenosyl-L-methionine contacts are provided by residues G113 and 133–138; that span reads IGDYVL.

The protein belongs to the RNA methyltransferase TrmD family. In terms of assembly, homodimer.

It is found in the cytoplasm. The catalysed reaction is guanosine(37) in tRNA + S-adenosyl-L-methionine = N(1)-methylguanosine(37) in tRNA + S-adenosyl-L-homocysteine + H(+). Specifically methylates guanosine-37 in various tRNAs. In Aeromonas salmonicida (strain A449), this protein is tRNA (guanine-N(1)-)-methyltransferase.